We begin with the raw amino-acid sequence, 419 residues long: Light-dependent chlorophyll f synthase (419 aa).

The next 5 helical transmembrane spans lie at 73-90, 162-177, 186-200, 241-262, and 323-337; these read YIGW…TAAI, HFII…EWEL, WISL…ASVS, LHQM…HGSL, and CLAA…SAAI. Residue H162 coordinates a chlorophyll. Position 242 (H242) interacts with a chlorophyll.

It belongs to the reaction center PufL/M/PsbA/D family. As to quaternary structure, homodimer.

It is found in the cellular thylakoid membrane. Its function is as follows. Synthesizes chlorophyll f or chlorophyllide f (Chl f, 2-formyl chlorophyll a), probably by oxidation of chlorophyll a or chlorophyllide a and reduction of plastoquinone. The reaction is probably light-dependent. Chl f absorbs far red light (FRL, 707 nm in 100% methanol), and is synthesized when cells are grown in FRL, where it provides the advantage of extending the spectral range of harvested light in terrestrial cyanobacteria. Chl f synthesis is probably light-dependent. This Synechococcus sp. (strain ATCC 29403 / PCC 7335) protein is Light-dependent chlorophyll f synthase.